Consider the following 360-residue polypeptide: Histidinol-phosphate aminotransferase (360 aa).

Position 224 is an N6-(pyridoxal phosphate)lysine (Lys-224).

It belongs to the class-II pyridoxal-phosphate-dependent aminotransferase family. Histidinol-phosphate aminotransferase subfamily. The cofactor is pyridoxal 5'-phosphate.

It carries out the reaction L-histidinol phosphate + 2-oxoglutarate = 3-(imidazol-4-yl)-2-oxopropyl phosphate + L-glutamate. Its pathway is amino-acid biosynthesis; L-histidine biosynthesis; L-histidine from 5-phospho-alpha-D-ribose 1-diphosphate: step 7/9. The sequence is that of Histidinol-phosphate aminotransferase from Methanococcoides burtonii (strain DSM 6242 / NBRC 107633 / OCM 468 / ACE-M).